The primary structure comprises 121 residues: RxLR effector protein PexRD2 (121 aa).

The N-terminal stretch at 1–20 (MRLSYVIVVIATSFLVTTEA) is a signal peptide. The RxLR-dEER signature appears at 38–56 (RLLRKHYTAAENDDDSEAR). The interval 57–121 (ALNTEKMKTM…LNYVAEHTAV (65 aa)) is WY domain.

Belongs to the RxLR effector family. As to quaternary structure, homodimer. Interacts with host MAPKKK epsilon (via its kinase domain).

It is found in the secreted. It localises to the host cytoplasm. The protein localises to the host nucleus. Functionally, effector that enhances P.infestans colonization of Nicotiana benthamiana leaves. Induces a weak Cell death response in N.benthamiana. PexRD2-induced cell death is dependent on SGT1, suggesting that PexRD2 is recognized by the plant immune system. Interacts with the kinase domain of the host MAPKKK epsilon, a positive regulator of cell death associated with plant immunity, and perturbs signaling pathways triggered by MAPKKK epsilon. This is RxLR effector protein PexRD2 from Phytophthora infestans (strain T30-4) (Potato late blight agent).